Reading from the N-terminus, the 138-residue chain is uncharacterized protein (138 aa).

The 125-residue stretch at 9-133 (EDEWKKELGP…NSASLEFHNE (125 aa)) folds into the MsrB domain. Positions 49, 52, 97, and 100 each coordinate Zn(2+). Residue C122 is the Nucleophile of the active site.

This sequence belongs to the MsrB Met sulfoxide reductase family. Zn(2+) serves as cofactor.

It localises to the cytoplasm. The protein resides in the nucleus. This is an uncharacterized protein from Schizosaccharomyces pombe (strain 972 / ATCC 24843) (Fission yeast).